The primary structure comprises 252 residues: Undecaprenyl-diphosphatase (252 aa).

Transmembrane regions (helical) follow at residues 1–21 (MTTL…FLPI), 42–62 (HKAF…FLYF), 74–94 (ILIA…IIKS), 95–115 (LFNP…LILI), 172–192 (AAEF…FYDV), 206–226 (NLIV…KWLL), and 232–252 (HSFI…YLWY).

The protein belongs to the UppP family.

The protein resides in the cell inner membrane. It carries out the reaction di-trans,octa-cis-undecaprenyl diphosphate + H2O = di-trans,octa-cis-undecaprenyl phosphate + phosphate + H(+). Functionally, catalyzes the dephosphorylation of undecaprenyl diphosphate (UPP). Confers resistance to bacitracin. In Sulfurihydrogenibium sp. (strain YO3AOP1), this protein is Undecaprenyl-diphosphatase.